Here is a 348-residue protein sequence, read N- to C-terminus: Probable dual-specificity RNA methyltransferase RlmN (348 aa).

Residue E93 is the Proton acceptor of the active site. One can recognise a Radical SAM core domain in the interval 99–323; the sequence is TEKRLTACLS…QTRLSNSGIN (225 aa). An intrachain disulfide couples C106 to C338. [4Fe-4S] cluster is bound by residues C113, C117, and C120. S-adenosyl-L-methionine is bound by residues 160–161, S190, 219–221, and N295; these read GE and SLH. C338 functions as the S-methylcysteine intermediate in the catalytic mechanism.

This sequence belongs to the radical SAM superfamily. RlmN family. The cofactor is [4Fe-4S] cluster.

It localises to the cytoplasm. The catalysed reaction is adenosine(2503) in 23S rRNA + 2 reduced [2Fe-2S]-[ferredoxin] + 2 S-adenosyl-L-methionine = 2-methyladenosine(2503) in 23S rRNA + 5'-deoxyadenosine + L-methionine + 2 oxidized [2Fe-2S]-[ferredoxin] + S-adenosyl-L-homocysteine. The enzyme catalyses adenosine(37) in tRNA + 2 reduced [2Fe-2S]-[ferredoxin] + 2 S-adenosyl-L-methionine = 2-methyladenosine(37) in tRNA + 5'-deoxyadenosine + L-methionine + 2 oxidized [2Fe-2S]-[ferredoxin] + S-adenosyl-L-homocysteine. Functionally, specifically methylates position 2 of adenine 2503 in 23S rRNA and position 2 of adenine 37 in tRNAs. The polypeptide is Probable dual-specificity RNA methyltransferase RlmN (Prochlorococcus marinus subsp. pastoris (strain CCMP1986 / NIES-2087 / MED4)).